The chain runs to 515 residues: Cytoplasmic dynein 1 light intermediate chain 1 (515 aa).

A compositionally biased stretch (low complexity) spans 1 to 24; it reads MAAVGRAGSFGSSSASGAANNASA. The disordered stretch occupies residues 1–34; the sequence is MAAVGRAGSFGSSSASGAANNASAELRAGGEEDD. 64-71 provides a ligand contact to ATP; it reads GEDGAGKT. Disordered regions lie at residues 370–424 and 445–515; these read QSQL…DPNM and KTGS…GEAS. Residues 397–409 show a composition bias toward polar residues; that stretch reads RTPNRSVTSNVAS. Positions 448-468 are enriched in gly residues; that stretch reads SPGGPGGVGGSPGGGSAGGTG. Residues 490 to 499 are compositionally biased toward basic and acidic residues; the sequence is ELDRISRKPE. Polar residues predominate over residues 502–515; the sequence is SPTSPTSPTEGEAS.

This sequence belongs to the dynein light intermediate chain family. In terms of assembly, homodimer. The cytoplasmic dynein 1 complex consists of two catalytic heavy chains (HCs) and a number of non-catalytic subunits presented by intermediate chains (ICs). Phosphorylated.

The protein resides in the cytoplasm. The protein localises to the cytoskeleton. It is found in the chromosome. It localises to the centromere. Its subcellular location is the kinetochore. The protein resides in the spindle pole. The protein localises to the recycling endosome membrane. Functionally, acts as one of several non-catalytic accessory components of the cytoplasmic dynein 1 complex that are thought to be involved in linking dynein to cargos and to adapter proteins that regulate dynein function. Cytoplasmic dynein 1 acts as a motor for the intracellular retrograde motility of vesicles and organelles along microtubules. May play a role in binding dynein to membranous organelles or chromosomes. May regulate the movement of peripheral sorting endosomes along microtubule tracks toward the microtubule organizing center/centrosome, generating the endosomal recycling compartment. The protein is Cytoplasmic dynein 1 light intermediate chain 1 (DYNC1LI1) of Gallus gallus (Chicken).